The primary structure comprises 54 residues: MARNEIRPAVKLRSTAGTGYTYITRKNRRNDPDRLILSKYDPVIRKHVPFREER.

Belongs to the bacterial ribosomal protein bL33 family.

This chain is Large ribosomal subunit protein bL33A, found in Mycobacterium marinum (strain ATCC BAA-535 / M).